The primary structure comprises 82 residues: M-theraphotoxin-Gr1a (82 aa).

The N-terminal stretch at 1–21 (MKTSVVFVIAGLALLSVVCYA) is a signal peptide. The propeptide occupies 22–46 (SELKEQSSVNEVLSTIFHFEQPEER). 3 disulfide bridges follow: C48–C63, C55–C69, and C62–C76. At F80 the chain carries Phenylalanine amide.

It belongs to the neurotoxin 10 (Hwtx-1) family. 52 (MTx4) subfamily. As to expression, expressed by the venom gland.

Its subcellular location is the secreted. Functionally, this cationic hydrophobic peptide acts on a lot of different channels and has an antimicrobial activity. It blocks mechanosensitive ion channels (also named stretch-activated channels or SACs), without having effect on whole-cell voltage-sensitive currents. It also affects acetylcholine receptors (nAChRs) through interactions with membrane lipids by prolonging the closing time without affecting channel conductance or opening activity. It shows high affinity for lipid bilayers. It acts by partitioning into the membrane and perturbing the interface between the channel and the lipid bilayer without necessarily being in physical contact with the channel. It inhibits atrial fibrillation as well as the membrane motor of outer hair cells at low doses. It also binds to the voltage sensor of voltage-gated potassium channels from the archaebacterium Aeropyrum pernix (KvAP) without affecting channel gating. It also shows a low inhibition on a large spectra of sodium channels (Nav1.1/SCN1A, Nav1.2/SCN2A, Nav1.3/SCN3A, Nav1.4/SCN4A, Nav1.5/SCN5A, Nav1.6/SCN8A, Nav1.7/SCN9A) (IC(50)=7.4-14 uM), and potassium channels Kv11.1/KCNH2 and Kv11.2/KCNH6 (IC(50)=11 uM for both). It exhibits antimicrobial activities against the Gram-positive bacteria B.subtilis (MIC=0.5 uM), S.aureus (MIC=2-4 uM), and S.epidermidis (MIC=4-8 uM), and Gram-negative bacteria S.typhimurium (MIC=32.64 uM), P.aeruginosa (MIC=8-16 uM), and E.coli (MIC=8-16 uM). The protein is M-theraphotoxin-Gr1a of Grammostola rosea (Chilean rose tarantula).